The chain runs to 358 residues: Microbial Terpene synthase-like protein 13 (358 aa).

It belongs to the terpene synthase family.

Its function is as follows. No terpene synthase activity detected in vitro. This Selaginella moellendorffii (Spikemoss) protein is Microbial Terpene synthase-like protein 13.